Consider the following 641-residue polypeptide: MAEEAVPSESRAAGRPSLELCAVALPGRREEVGHQDTAGHRRPRAHSRCWARGLLLLLWLLEAPLLLGVRAQPAGQVSGPGQQRPPPPQPQQGGQQYNGERGISIPDHGYCQPISIPLCTDIAYNQTIMPNLLGHTNQEDAGLEVHQFYPLVKVQCSAELKFFLCSMYAPVCTVLEQALPPCRSLCERAQGCEALMNKFGFQWPDTLKCEKFPVHGAGELCVGQNTSDKGTPTPSLLPEFWTSNPQHGGGGYRGGYPGGAGPVERGKFSCPRALRVPSYLNYHFLGEKDCGAPCEPTKVYGLMYFGPEELRFSRTWIGIWSVLCCASTLFTVLTYLVDMRRFSYPERPIIFLSGCYTAVAVAYIAGFLLEDRVVCNDKFAEDGARTVAQGTKKEGCTILFMMLYFFSMASSIWWVILSLTWFLAAGMKWGHEAIEANSQYFHLAAWAVPAIKTITILALGQVDGDVLSGVCFVGLNNVDALRGFVLAPLFVYLFIGTSFLLAGFVSLFRIRTIMKHDGTKTEKLEKLMVRIGVFSVLYTVPATIVIACYFYEQAFRDQWERSWVAQSCKSYAIPCPHLQGGGGVPPHPPMSPDFTVFMIKYLMTLIVGITSGFWIWSGKTLNSWRKFYTRLTNSKQGETTV.

The first 68 residues, methionine 1–glycine 68, serve as a signal peptide directing secretion. The Extracellular portion of the chain corresponds to valine 69–tryptophan 316. Positions alanine 74–glycine 99 are disordered. The FZ domain occupies proline 106–glutamine 224. Disulfide bonds link cysteine 111–cysteine 172, cysteine 119–cysteine 165, cysteine 156–cysteine 192, cysteine 182–cysteine 221, and cysteine 186–cysteine 209. Residue asparagine 125 is glycosylated (N-linked (GlcNAc...) asparagine). The N-linked (GlcNAc...) asparagine glycan is linked to asparagine 225. Residues isoleucine 317–valine 337 traverse the membrane as a helical segment. The Cytoplasmic portion of the chain corresponds to aspartate 338–proline 348. Residues isoleucine 349 to leucine 369 form a helical membrane-spanning segment. The Extracellular portion of the chain corresponds to glutamate 370–cysteine 396. A helical membrane pass occupies residues threonine 397–leucine 417. The Cytoplasmic segment spans residues serine 418–glutamine 439. A helical transmembrane segment spans residues tyrosine 440–glycine 460. Residues glutamine 461–glycine 483 are Extracellular-facing. Residues phenylalanine 484 to phenylalanine 504 traverse the membrane as a helical segment. Over valine 505–arginine 530 the chain is Cytoplasmic. A helical membrane pass occupies residues isoleucine 531–tyrosine 551. The Extracellular segment spans residues glutamate 552–threonine 595. A helical transmembrane segment spans residues valine 596–tryptophan 616. The Cytoplasmic segment spans residues serine 617–valine 641. Positions lysine 619–tryptophan 624 match the Lys-Thr-X-X-X-Trp motif, mediates interaction with the PDZ domain of Dvl family members motif. Residues threonine 639 to valine 641 carry the PDZ-binding motif.

The protein belongs to the G-protein coupled receptor Fz/Smo family. As to quaternary structure, interacts with MYOC. Interacts with WNT7B. Post-translationally, ubiquitinated by ZNRF3, leading to its degradation by the proteasome. Widely expressed. Most abundant in kidney, liver, uterus, ovary and heart. Lower levels seen in brain and intestine. Extremely low in calvaria, mammary glands and testis.

It is found in the cell membrane. Receptor for Wnt proteins. Activated by WNT3A, WNT3, WNT1 and to a lesser extent WNT2, but apparently not by WNT4, WNT5A, WNT5B, WNT6 or WNT7A. Contradictory results have been reported for activation by WNT7B. Functions in the canonical Wnt/beta-catenin signaling pathway. The canonical Wnt/beta-catenin signaling pathway leads to the activation of disheveled proteins, inhibition of GSK-3 kinase, nuclear accumulation of beta-catenin and activation of Wnt target genes. A second signaling pathway involving PKC and calcium fluxes has been seen for some family members, but it is not yet clear if it represents a distinct pathway or if it can be integrated in the canonical pathway, as PKC seems to be required for Wnt-mediated inactivation of GSK-3 kinase. Both pathways seem to involve interactions with G-proteins. May be involved in transduction and intercellular transmission of polarity information during tissue morphogenesis and/or in differentiated tissues. This chain is Frizzled-1 (Fzd1), found in Rattus norvegicus (Rat).